We begin with the raw amino-acid sequence, 511 residues long: Glucans biosynthesis protein G (511 aa).

An N-terminal signal peptide occupies residues 1–22; sequence MMKMRWLSAAVMLTLYTSSSWA.

The protein belongs to the OpgD/OpgG family.

The protein localises to the periplasm. It functions in the pathway glycan metabolism; osmoregulated periplasmic glucan (OPG) biosynthesis. In terms of biological role, involved in the biosynthesis of osmoregulated periplasmic glucans (OPGs). The protein is Glucans biosynthesis protein G of Shigella boydii serotype 4 (strain Sb227).